A 340-amino-acid polypeptide reads, in one-letter code: Heat-inducible transcription repressor HrcA (340 aa).

Belongs to the HrcA family.

Its function is as follows. Negative regulator of class I heat shock genes (grpE-dnaK-dnaJ and groELS operons). Prevents heat-shock induction of these operons. The sequence is that of Heat-inducible transcription repressor HrcA from Burkholderia ambifaria (strain MC40-6).